A 63-amino-acid chain; its full sequence is Large ribosomal subunit protein uL29 (63 aa).

This sequence belongs to the universal ribosomal protein uL29 family.

This chain is Large ribosomal subunit protein uL29, found in Aliarcobacter butzleri (strain RM4018) (Arcobacter butzleri).